Reading from the N-terminus, the 779-residue chain is Endonuclease MutS2 (779 aa).

ATP is bound at residue 328–335 (GPNTGGKT). A Smr domain is found at 704 to 779 (LDLRGKRYEE…GSGATIVTLG (76 aa)).

Belongs to the DNA mismatch repair MutS family. MutS2 subfamily. Homodimer. Binds to stalled ribosomes, contacting rRNA.

In terms of biological role, endonuclease that is involved in the suppression of homologous recombination and thus may have a key role in the control of bacterial genetic diversity. Functionally, acts as a ribosome collision sensor, splitting the ribosome into its 2 subunits. Detects stalled/collided 70S ribosomes which it binds and splits by an ATP-hydrolysis driven conformational change. Acts upstream of the ribosome quality control system (RQC), a ribosome-associated complex that mediates the extraction of incompletely synthesized nascent chains from stalled ribosomes and their subsequent degradation. Probably generates substrates for RQC. This is Endonuclease MutS2 from Streptococcus pyogenes serotype M5 (strain Manfredo).